Reading from the N-terminus, the 98-residue chain is NADH-ubiquinone oxidoreductase chain 4L (98 aa).

A run of 3 helical transmembrane segments spans residues 1–21 (MSPMYFSFSSAFMLGLMGLAF), 26–46 (LLSALLCLEGMMLTLFVATAT), and 58–78 (ILPMILLTFSACEASAGLAIL).

Belongs to the complex I subunit 4L family.

The protein resides in the mitochondrion membrane. It carries out the reaction a ubiquinone + NADH + 5 H(+)(in) = a ubiquinol + NAD(+) + 4 H(+)(out). In terms of biological role, core subunit of the mitochondrial membrane respiratory chain NADH dehydrogenase (Complex I) which catalyzes electron transfer from NADH through the respiratory chain, using ubiquinone as an electron acceptor. Part of the enzyme membrane arm which is embedded in the lipid bilayer and involved in proton translocation. This Scyliorhinus canicula (Small-spotted catshark) protein is NADH-ubiquinone oxidoreductase chain 4L (MT-ND4L).